The primary structure comprises 210 residues: Guanylate kinase (210 aa).

The Guanylate kinase-like domain maps to 5–183; the sequence is GILFVISAPS…AVEEFKSIIL (179 aa). 12 to 19 is an ATP binding site; sequence APSGAGKT.

This sequence belongs to the guanylate kinase family.

It is found in the cytoplasm. The catalysed reaction is GMP + ATP = GDP + ADP. In terms of biological role, essential for recycling GMP and indirectly, cGMP. The protein is Guanylate kinase of Syntrophotalea carbinolica (strain DSM 2380 / NBRC 103641 / GraBd1) (Pelobacter carbinolicus).